A 149-amino-acid chain; its full sequence is Nucleoside diphosphate kinase (149 aa).

ATP-binding residues include Lys9, Phe57, Arg85, Thr91, Arg102, and Asn112. His115 functions as the Pros-phosphohistidine intermediate in the catalytic mechanism.

This sequence belongs to the NDK family. In terms of assembly, homotetramer. Requires Mg(2+) as cofactor.

Its subcellular location is the cytoplasm. It catalyses the reaction a 2'-deoxyribonucleoside 5'-diphosphate + ATP = a 2'-deoxyribonucleoside 5'-triphosphate + ADP. It carries out the reaction a ribonucleoside 5'-diphosphate + ATP = a ribonucleoside 5'-triphosphate + ADP. Functionally, major role in the synthesis of nucleoside triphosphates other than ATP. The ATP gamma phosphate is transferred to the NDP beta phosphate via a ping-pong mechanism, using a phosphorylated active-site intermediate. This is Nucleoside diphosphate kinase from Desulforamulus reducens (strain ATCC BAA-1160 / DSM 100696 / MI-1) (Desulfotomaculum reducens).